A 239-amino-acid polypeptide reads, in one-letter code: Cysteine-rich venom protein ENH1 (239 aa).

The signal sequence occupies residues 1 to 18 (MIVFILLSLAAVLQQFVA). An SCP domain is found at 37-165 (VDMHNSFRRS…PYNYFYVCQY (129 aa)). Disulfide bonds link C74/C152, C91/C166, C147/C163, C185/C192, C188/C197, C210/C228, and C219/C232. Positions 201–234 (CPITNTFTNCDSLLQQNSCEDSYIKTNCGASCFC) constitute a ShKT domain.

This sequence belongs to the CRISP family. As to expression, expressed by the venom gland.

It is found in the secreted. Blocks contraction of smooth muscle elicited by high potassium-induced depolarization, but does not block caffeine-stimulated contraction. May target voltage-gated calcium channels on smooth muscle. In Pseudoferania polylepis (Macleay's water snake), this protein is Cysteine-rich venom protein ENH1.